The following is a 686-amino-acid chain: Soluble guanylate cyclase gcy-34 (686 aa).

H105 provides a ligand contact to heme. Coiled-coil stretches lie at residues 306–335 and 398–432; these read KKHM…ELTQ and VEVN…LKDM. Residues 455–583 form the Guanylate cyclase domain; that stretch reads TVMFCDLPAF…ETVTLASQME (129 aa). Mg(2+) is bound by residues D460 and D504.

The protein belongs to the adenylyl cyclase class-4/guanylyl cyclase family. In terms of assembly, heterodimer; with other soluble guanylate cyclases. Requires heme as cofactor. Expressed in a small number of neurons, corresponding to URX, AQR and PQR neurons.

Its subcellular location is the cytoplasm. It catalyses the reaction GTP = 3',5'-cyclic GMP + diphosphate. May be regulated by molecular oxygen. Probably not activated by nitric oxide (NO). Synthesizes cyclic GMP (cGMP) from GTP. May be involved in sensitivity to quinine by regulating egl-4 activity through the production of cGMP. The polypeptide is Soluble guanylate cyclase gcy-34 (gcy-34) (Caenorhabditis elegans).